A 415-amino-acid polypeptide reads, in one-letter code: Vascular endothelial growth factor C (415 aa).

An N-terminal signal peptide occupies residues 1 to 31 (MHLLCFLSLACSLLAAALIPGPREAPATVAA). Positions 32 to 107 (FESGLGFSEA…RTGDTVKLAA (76 aa)) are excised as a propeptide. 3 disulfide bridges follow: Cys-127-Cys-169, Cys-158-Cys-205, and Cys-162-Cys-207. N-linked (GlcNAc...) asparagine glycans are attached at residues Asn-171, Asn-201, and Asn-236. The propeptide occupies 224-415 (SLPATLPQCQ…PSYWKRPHLN (192 aa)). 4 repeat units span residues 276–291 (CGPN…QCVC), 300–315 (CGPH…QCVC), 324–339 (CGAN…QCVC), and 343–358 (CPRN…ACEC). Positions 276-358 (CGPNKELDED…LNPGKCACEC (83 aa)) are 4 X 16 AA repeats of C-X(10)-C-X-C-X(1,3)-C.

It belongs to the PDGF/VEGF growth factor family. As to quaternary structure, homodimer; non-covalent and antiparallel. Interacts with FLT4/VEGFR3; the interaction is required for FLT4/VEGFR3 homodimarization and activation. In terms of processing, undergoes a complex proteolytic maturation which generates a variety of processed secreted forms with increased activity toward VEGFR-3, but only the fully processed form could activate VEGFR-2. VEGF-C first form an antiparallel homodimer linked by disulfide bonds. Before secretion, a cleavage occurs between Arg-223 and Ser-224 producing a heterotetramer. The next extracellular step of the processing removes the N-terminal propeptide. Finally the mature VEGF-C is composed mostly of two VEGF homology domains (VHDs) bound by non-covalent interactions. As to expression, highly expressed in the lung, ovary, preputial gland and the adrenal gland. Expressed in the post-pubertal mammary glands.

It localises to the secreted. Functionally, growth factor active in angiogenesis, and endothelial cell growth, stimulating their proliferation and migration and also has effects on the permeability of blood vessels. May function in angiogenesis of the venous and lymphatic vascular systems during embryogenesis, and also in the maintenance of differentiated lymphatic endothelium in adults. Binds and activates KDR/VEGFR2 and FLT4/VEGFR3 receptors. This is Vascular endothelial growth factor C (Vegfc) from Rattus norvegicus (Rat).